The sequence spans 106 residues: UPF0145 protein GSU2791 (106 aa).

The protein belongs to the UPF0145 family.

This is UPF0145 protein GSU2791 from Geobacter sulfurreducens (strain ATCC 51573 / DSM 12127 / PCA).